The sequence spans 424 residues: CinA-like protein (424 aa).

Belongs to the CinA family.

This is CinA-like protein from Prochlorococcus marinus (strain MIT 9301).